A 1460-amino-acid chain; its full sequence is Collagen alpha-1(I) chain (1460 aa).

A signal peptide spans 1–22 (MFSFVDLRLLLLLAATALLTHG). A propeptide spans 23–157 (QEEGQEEDIP…PPGLGGNFAP (135 aa)) (N-terminal propeptide). One can recognise a VWFC domain in the interval 34–92 (VTCVQNGLRYYDRDVWKPEACRICVCDNGNVLCDDVICDETKNCPGAQVPPGECCPVCP). The tract at residues 96–1213 (ASPTDQETTG…KAHDGGRYYR (1118 aa)) is disordered. The segment covering 134-149 (PGLPGPPGPPGPPGPP) has biased composition (pro residues). The segment at 158–174 (QMSYGYDEKSTGGISVP) is nonhelical region (N-terminal). At K166 the chain carries Allysine. Residue S167 is modified to Phosphoserine. The segment at 175 to 1188 (GPMGPSGPRG…PGPPGPPGPP (1014 aa)) is triple-helical region. 4-hydroxyproline is present on residues P186, P189, P192, P201, P204, P207, P222, P237, P243, P252, and P258. Low complexity predominate over residues 194 to 213 (PQGFQGPPGEPGEPGASGPM). Residues 225–239 (NGDDGEAGKPGRPGE) are compositionally biased toward basic and acidic residues. At K261 the chain carries 5-hydroxylysine; alternate. O-linked (Gal...) hydroxylysine; alternate glycosylation is present at K261. Residue S267 is modified to Phosphoserine. Residues 275-291 (DAGPAGPKGEPGSPGEN) show a composition bias toward low complexity. A 4-hydroxyproline mark is found at P285, P288, P294, P303, and P309. Residues 314–327 (PAGARGNDGATGAA) show a composition bias toward low complexity. Residues 329–341 (PPGPTGPAGPPGF) show a composition bias toward pro residues. A 4-hydroxyproline mark is found at P330, P339, P342, P369, P372, P384, P390, P399, P405, P408, and P423. Over residues 375-414 (AGAAGPAGNPGADGQPGAKGANGAPGIAGAPGFPGARGPS) the composition is skewed to low complexity. Position 426 is a 5-hydroxylysine (K426). 4-hydroxyproline occurs at positions 432, 435, 447, 456, 471, 477, 486, and 492. A compositionally biased stretch (gly residues) spans 481-490 (GERGGPGSRG). The residue at position 501 (K501) is a 5-hydroxylysine. A 4-hydroxyproline mark is found at P510, P519, P525, P531, P540, P543, P552, P561, P567, P579, P588, P597, P600, P618, P636, P642, P648, P654, P660, P666, P678, P687, P699, P711, P714, P720, P726, and P735. Low complexity predominate over residues 534 to 560 (KGLTGSPGSPGPDGKTGPPGPAGQDGR). The span at 569–588 (ARGQAGVMGFPGPKGAAGEP) shows a compositional bias: low complexity. The segment covering 630–657 (QGPAGSPGFQGLPGPAGPPGEAGKPGEQ) has biased composition (low complexity). The segment covering 692-720 (PRGANGAPGNDGAKGDAGAPGAPGSQGAP) has biased composition (low complexity). The short motif at 741-743 (RGD) is the Cell attachment site element. Position 747 is a 5-hydroxylysine (K747). 4-hydroxyproline occurs at positions 753, 768, and 774. Residues 780–794 (AGPSGPAGPTGARGA) show a composition bias toward low complexity. S783 is modified (phosphoserine). P795, P801, P804, P813, P819, P837, P846, and P855 each carry 4-hydroxyproline. Positions 807-834 (AGFAGPPGADGQPGAKGEPGDAGAKGDA) are enriched in low complexity. Positions 836 to 848 (PPGPAGPTGPPGP) are enriched in pro residues. K858 is subject to 5-hydroxylysine. A compositionally biased stretch (low complexity) spans 863-879 (SAGPPGATGFPGAAGRV). P867 and P873 each carry 4-hydroxyproline. 3-hydroxyproline is present on P881. 4-hydroxyproline occurs at positions 882, 891, 894, 915, 924, 933, 942, 960, 969, 972, 978, 993, 999, 1005, 1014, and 1020. The span at 908 to 917 (ETGPAGRPGE) shows a compositional bias: low complexity. The segment covering 927-951 (AGEKGSPGADGPAGAPGTPGPQGIA) has biased composition (low complexity). Positions 992 to 1002 (PPGPMGPPGLA) are enriched in pro residues. Low complexity predominate over residues 1004 to 1019 (PPGESGREGSPGAEGS). K1029 is subject to 5-hydroxylysine. Residues 1038–1053 (AGPPGAPGAPGAPGPV) are compositionally biased toward pro residues. Residues P1041, P1044, and P1047 each carry the 4-hydroxyproline modification. Residues 1074–1088 (IGPVGARGPAGPQGP) show a composition bias toward low complexity. The Cell attachment site signature appears at 1089–1091 (RGD). Residues 1089–1103 (RGDKGETGEQGDRGI) are compositionally biased toward basic and acidic residues. 5-hydroxylysine is present on K1092. Residue K1104 is modified to 5-hydroxylysine; alternate. An O-linked (Gal...) hydroxylysine; alternate glycan is attached at K1104. 4-hydroxyproline occurs at positions 1116, 1119, 1122, 1140, and 1155. Low complexity predominate over residues 1122 to 1155 (PGEQGPSGASGPAGPRGPPGSAGSPGKDGLNGLP). Position 1160 is a 3-hydroxyproline (P1160). The residue at position 1161 (P1161) is a 4-hydroxyproline. The segment covering 1173–1188 (VGPPGPPGPPGPPGPP) has biased composition (pro residues). P1175 is modified (3-hydroxyproline). P1176 carries the 4-hydroxyproline modification. P1178 is modified (3-hydroxyproline). At P1179 the chain carries 4-hydroxyproline. Residue P1181 is modified to 3-hydroxyproline. Residues P1182, P1185, and P1188 each carry the 4-hydroxyproline modification. The interval 1189 to 1214 (SGGFDFSFLPQPPQEKAHDGGRYYRA) is nonhelical region (C-terminal). The span at 1203–1213 (EKAHDGGRYYR) shows a compositional bias: basic and acidic residues. At K1204 the chain carries Allysine. The propeptide at 1215–1460 (DDANVVRDRD…GMDIGPVCFL (246 aa)) is C-terminal propeptide. The region spanning 1225 to 1460 (LEVDTTLKSL…GMDIGPVCFL (236 aa)) is the Fibrillar collagen NC1 domain. 3 disulfides stabilise this stretch: C1255-C1287, C1295-C1458, and C1366-C1411. The Ca(2+) site is built by D1273, N1275, Q1276, C1278, and D1281. Residue N1361 is glycosylated (N-linked (GlcNAc...) asparagine).

This sequence belongs to the fibrillar collagen family. As to quaternary structure, trimers of one alpha 2(I) and two alpha 1(I) chains. Interacts with MRC2. Interacts with TRAM2. Interacts with MFAP4 in a Ca (2+)-dependent manner. Post-translationally, contains mostly 4-hydroxyproline. Proline residues at the third position of the tripeptide repeating unit (G-X-Y) are hydroxylated in some or all of the chains. In terms of processing, contains 3-hydroxyproline at a few sites. This modification occurs on the first proline residue in the sequence motif Gly-Pro-Hyp, where Hyp is 4-hydroxyproline. Lysine residues at the third position of the tripeptide repeating unit (G-X-Y) are 5-hydroxylated in some or all of the chains. Post-translationally, O-glycosylated on hydroxylated lysine residues. The O-linked glycan consists of a Glc-Gal disaccharide.

The protein localises to the secreted. Its subcellular location is the extracellular space. The protein resides in the extracellular matrix. Functionally, type I collagen is a member of group I collagen (fibrillar forming collagen). The sequence is that of Collagen alpha-1(I) chain (COL1A1) from Canis lupus familiaris (Dog).